A 1363-amino-acid polypeptide reads, in one-letter code: Collagen alpha-2(I) chain (1363 aa).

The signal sequence occupies residues 1-22 (MLSFVDTRILLLLAVTSYLATS). Residue Gln-23 is modified to Pyrrolidone carboxylic acid. The propeptide at 23–77 (QHLFQASAGRKGPRGDKGPQGERGPPGPPGRDGEDGPPGPPGPPGPPGLGGNFAA) is N-terminal propeptide. Residues 28 to 1110 (ASAGRKGPRG…GPNGGGYEVG (1083 aa)) are disordered. A compositionally biased stretch (pro residues) spans 59–69 (PPGPPGPPGPP). At Gln-78 the chain carries Pyrrolidone carboxylic acid. An Allysine modification is found at Lys-83. Positions 88 to 97 (GPGPMGLMGP) are enriched in low complexity. Positions 98-110 (RGPPGASGPPGPP) are enriched in pro residues. A compositionally biased stretch (low complexity) spans 112-128 (FQGVPGEPGEPGQTGPQ). Positions 140–154 (AGEDGHPGKPGRPGE) are enriched in basic and acidic residues. Lys-176 bears the 5-hydroxylysine; alternate mark. O-linked (Gal...) hydroxylysine; alternate glycosylation is present at Lys-176. Composition is skewed to low complexity over residues 224-263 (IGAP…PGAK) and 299-320 (PGAN…AGAP). Over residues 322-335 (LPGPRGIPGPPGPA) the composition is skewed to pro residues. Residues Pro-440 and Pro-443 each carry the 4-hydroxyproline modification. Low complexity-rich tracts occupy residues 601-610 (PAGPIGSRGP) and 674-683 (RGLPGAIGAP). Residues 684–699 (GPAGGAGDRGEGGPAG) are compositionally biased toward gly residues. The span at 721-736 (PSGFAGPPGAAGQPGA) shows a compositional bias: low complexity. Residues 737-746 (KGERGPKGPK) are compositionally biased toward basic and acidic residues. Composition is skewed to low complexity over residues 748 to 794 (ETGP…AGRV), 842 to 875 (AGEK…LGLP), 898 to 931 (VSGP…NPGN), 955 to 965 (PSGALGAPGPH), and 986 to 995 (VGPAGAFGPR). Basic and acidic residues predominate over residues 1004-1015 (RGEKGEPGDKGH). Positions 1036–1049 (QHGDQGPPGNNGPA) are enriched in low complexity. Pro residues-rich tracts occupy residues 1051-1060 (PRGPPGPSGP) and 1088-1102 (AGPP…PPGP). Positions 1118–1363 (ADQPSLRPKD…GLHIGPVCFK (246 aa)) are cleaved as a propeptide — C-terminal propeptide. In terms of domain architecture, Fibrillar collagen NC1 spans 1128–1363 (YEVDATLKTL…GLHIGPVCFK (236 aa)). 3 disulfides stabilise this stretch: Cys-1158/Cys-1190, Cys-1198/Cys-1361, and Cys-1269/Cys-1314. The Ca(2+) site is built by Asp-1176, Asn-1178, Gln-1179, Cys-1181, and Asp-1184. The N-linked (GlcNAc...) asparagine glycan is linked to Asn-1264.

This sequence belongs to the fibrillar collagen family. As to quaternary structure, trimers of one alpha 2(I) and two alpha 1(I) chains. In terms of processing, prolines at the third position of the tripeptide repeating unit (G-X-Y) are hydroxylated in some or all of the chains. Post-translationally, the N-terminus of the mature protein is blocked. In terms of tissue distribution, forms the fibrils of tendon, ligaments and bones. In bones the fibrils are mineralized with calcium hydroxyapatite.

The protein resides in the secreted. It localises to the extracellular space. It is found in the extracellular matrix. In terms of biological role, type I collagen is a member of group I collagen (fibrillar forming collagen). The polypeptide is Collagen alpha-2(I) chain (COL1A2) (Gallus gallus (Chicken)).